Consider the following 380-residue polypeptide: Queuine tRNA-ribosyltransferase (380 aa).

Catalysis depends on aspartate 93, which acts as the Proton acceptor. Substrate-binding positions include 93 to 97 (DSGGF), aspartate 147, glutamine 198, and glycine 225. The tract at residues 256–262 (GVGLPSN) is RNA binding. The active-site Nucleophile is the aspartate 275. The interval 280-284 (ARNGR) is RNA binding; important for wobble base 34 recognition. Zn(2+)-binding residues include cysteine 313, cysteine 315, cysteine 318, and histidine 344.

The protein belongs to the queuine tRNA-ribosyltransferase family. In terms of assembly, homodimer. Within each dimer, one monomer is responsible for RNA recognition and catalysis, while the other monomer binds to the replacement base PreQ1. Requires Zn(2+) as cofactor.

It catalyses the reaction 7-aminomethyl-7-carbaguanine + guanosine(34) in tRNA = 7-aminomethyl-7-carbaguanosine(34) in tRNA + guanine. Its pathway is tRNA modification; tRNA-queuosine biosynthesis. Functionally, catalyzes the base-exchange of a guanine (G) residue with the queuine precursor 7-aminomethyl-7-deazaguanine (PreQ1) at position 34 (anticodon wobble position) in tRNAs with GU(N) anticodons (tRNA-Asp, -Asn, -His and -Tyr). Catalysis occurs through a double-displacement mechanism. The nucleophile active site attacks the C1' of nucleotide 34 to detach the guanine base from the RNA, forming a covalent enzyme-RNA intermediate. The proton acceptor active site deprotonates the incoming PreQ1, allowing a nucleophilic attack on the C1' of the ribose to form the product. After dissociation, two additional enzymatic reactions on the tRNA convert PreQ1 to queuine (Q), resulting in the hypermodified nucleoside queuosine (7-(((4,5-cis-dihydroxy-2-cyclopenten-1-yl)amino)methyl)-7-deazaguanosine). This is Queuine tRNA-ribosyltransferase from Clostridium perfringens (strain 13 / Type A).